The primary structure comprises 107 residues: Nucleoid-associated protein XF_1808 (107 aa).

The protein belongs to the YbaB/EbfC family. In terms of assembly, homodimer.

The protein localises to the cytoplasm. The protein resides in the nucleoid. In terms of biological role, binds to DNA and alters its conformation. May be involved in regulation of gene expression, nucleoid organization and DNA protection. This chain is Nucleoid-associated protein XF_1808, found in Xylella fastidiosa (strain 9a5c).